The primary structure comprises 123 residues: Ribosome-binding factor A (123 aa).

The protein belongs to the RbfA family. As to quaternary structure, monomer. Binds 30S ribosomal subunits, but not 50S ribosomal subunits or 70S ribosomes.

The protein resides in the cytoplasm. Functionally, one of several proteins that assist in the late maturation steps of the functional core of the 30S ribosomal subunit. Associates with free 30S ribosomal subunits (but not with 30S subunits that are part of 70S ribosomes or polysomes). Required for efficient processing of 16S rRNA. May interact with the 5'-terminal helix region of 16S rRNA. The polypeptide is Ribosome-binding factor A (Legionella pneumophila (strain Lens)).